The chain runs to 160 residues: uncharacterized protein (160 aa).

Belongs to the Dps family.

This is an uncharacterized protein from Haemophilus influenzae (strain ATCC 51907 / DSM 11121 / KW20 / Rd).